We begin with the raw amino-acid sequence, 351 residues long: DNA polymerase IV (351 aa).

Residues isoleucine 4–glycine 185 form the UmuC domain. Residues aspartate 8 and aspartate 103 each contribute to the Mg(2+) site. Glutamate 104 is a catalytic residue.

The protein belongs to the DNA polymerase type-Y family. Monomer. Mg(2+) serves as cofactor.

It is found in the cytoplasm. The enzyme catalyses DNA(n) + a 2'-deoxyribonucleoside 5'-triphosphate = DNA(n+1) + diphosphate. Functionally, poorly processive, error-prone DNA polymerase involved in untargeted mutagenesis. Copies undamaged DNA at stalled replication forks, which arise in vivo from mismatched or misaligned primer ends. These misaligned primers can be extended by PolIV. Exhibits no 3'-5' exonuclease (proofreading) activity. May be involved in translesional synthesis, in conjunction with the beta clamp from PolIII. This chain is DNA polymerase IV, found in Escherichia coli O1:K1 / APEC.